Here is a 179-residue protein sequence, read N- to C-terminus: NAD(P)H-quinone oxidoreductase subunit 6, chloroplastic (179 aa).

The next 5 membrane-spanning stretches (helical) occupy residues 8 to 28, 30 to 50, 58 to 78, 98 to 118, and 150 to 170; these read ITLF…VFFN, IIYS…LYLL, VAQV…AIML, SFCV…TTPW, and VLPF…AVII.

Belongs to the complex I subunit 6 family. NDH is composed of at least 16 different subunits, 5 of which are encoded in the nucleus.

Its subcellular location is the plastid. The protein resides in the chloroplast thylakoid membrane. It carries out the reaction a plastoquinone + NADH + (n+1) H(+)(in) = a plastoquinol + NAD(+) + n H(+)(out). The catalysed reaction is a plastoquinone + NADPH + (n+1) H(+)(in) = a plastoquinol + NADP(+) + n H(+)(out). NDH shuttles electrons from NAD(P)H:plastoquinone, via FMN and iron-sulfur (Fe-S) centers, to quinones in the photosynthetic chain and possibly in a chloroplast respiratory chain. The immediate electron acceptor for the enzyme in this species is believed to be plastoquinone. Couples the redox reaction to proton translocation, and thus conserves the redox energy in a proton gradient. The chain is NAD(P)H-quinone oxidoreductase subunit 6, chloroplastic (ndhG) from Chaetosphaeridium globosum (Charophycean green alga).